The following is a 293-amino-acid chain: Adenylyl-sulfate kinase 2, chloroplastic (293 aa).

Residues 1–59 constitute a chloroplast transit peptide; sequence MEGLAIRASRPSVFCSIPGLGGDSHRKPPSDGFLKLPASSIPADSRKLVANSTSFHPIS. 122-130 serves as a coordination point for ATP; it reads GLSGSGKST. Residues Asp152, Arg155, Arg169, Asn172, 195–196, and Gly245 each bind substrate; that span reads IS. The active-site Phosphoserine intermediate is Ser196.

This sequence belongs to the APS kinase family. In terms of assembly, interacts with APK1. Expressed in root vasculature, root tips, leaf epidermal cells and funiculus of developing seeds.

Its subcellular location is the plastid. It localises to the chloroplast. It carries out the reaction adenosine 5'-phosphosulfate + ATP = 3'-phosphoadenylyl sulfate + ADP + H(+). The protein operates within sulfur metabolism; hydrogen sulfide biosynthesis; sulfite from sulfate: step 2/3. In terms of biological role, catalyzes the synthesis of activated sulfate. Essential for plant reproduction and viability. Required for the production of glucosinolates. In Arabidopsis thaliana (Mouse-ear cress), this protein is Adenylyl-sulfate kinase 2, chloroplastic (APK2).